Consider the following 630-residue polypeptide: tRNA uridine 5-carboxymethylaminomethyl modification enzyme MnmG (630 aa).

FAD contacts are provided by residues 14-19, Val-126, and Ser-181; that span reads GAGHAG. Position 273 to 287 (273 to 287) interacts with NAD(+); the sequence is GPRYCPSIEDKVVRF. Position 370 (Gln-370) interacts with FAD.

Belongs to the MnmG family. In terms of assembly, homodimer. Heterotetramer of two MnmE and two MnmG subunits. It depends on FAD as a cofactor.

It localises to the cytoplasm. NAD-binding protein involved in the addition of a carboxymethylaminomethyl (cmnm) group at the wobble position (U34) of certain tRNAs, forming tRNA-cmnm(5)s(2)U34. The protein is tRNA uridine 5-carboxymethylaminomethyl modification enzyme MnmG of Alkaliphilus metalliredigens (strain QYMF).